A 133-amino-acid chain; its full sequence is Small ribosomal subunit protein uS8 (133 aa).

The protein belongs to the universal ribosomal protein uS8 family. Part of the 30S ribosomal subunit. Contacts proteins S5 and S12.

Functionally, one of the primary rRNA binding proteins, it binds directly to 16S rRNA central domain where it helps coordinate assembly of the platform of the 30S subunit. The protein is Small ribosomal subunit protein uS8 of Prochlorococcus marinus (strain MIT 9215).